We begin with the raw amino-acid sequence, 51 residues long: Small ribosomal subunit protein eS31 (51 aa).

4 residues coordinate Zn(2+): cysteine 22, cysteine 25, cysteine 40, and cysteine 43. Residues 22–43 form a C4-type zinc finger; that stretch reads CPRCGPGVFMADHGDRWACGRC.

This sequence belongs to the eukaryotic ribosomal protein eS31 family. In terms of assembly, part of the 30S ribosomal subunit. Zn(2+) is required as a cofactor.

The sequence is that of Small ribosomal subunit protein eS31 from Pyrococcus abyssi (strain GE5 / Orsay).